The chain runs to 142 residues: MFKDLEKARPGTRRDLPAVLAALPWNAQGLLPAIAQQHDSGEVLMMAWMNREALEETLRTGRVCYYSRSRRSLWRKGESSGQVQRLVELRLDCDGDTLLLRVDQTGPACHTGRRSCFYNRLDGDGLEVIAAPEIDPETLYHR.

A Mg(2+)-binding site is contributed by D92. C93 provides a ligand contact to Zn(2+). 2 residues coordinate Mg(2+): D94 and D96. Zn(2+) contacts are provided by C109 and C116.

This sequence belongs to the PRA-CH family. Homodimer. It depends on Mg(2+) as a cofactor. Requires Zn(2+) as cofactor.

It localises to the cytoplasm. It catalyses the reaction 1-(5-phospho-beta-D-ribosyl)-5'-AMP + H2O = 1-(5-phospho-beta-D-ribosyl)-5-[(5-phospho-beta-D-ribosylamino)methylideneamino]imidazole-4-carboxamide. Its pathway is amino-acid biosynthesis; L-histidine biosynthesis; L-histidine from 5-phospho-alpha-D-ribose 1-diphosphate: step 3/9. Its function is as follows. Catalyzes the hydrolysis of the adenine ring of phosphoribosyl-AMP. The protein is Phosphoribosyl-AMP cyclohydrolase of Alkalilimnicola ehrlichii (strain ATCC BAA-1101 / DSM 17681 / MLHE-1).